The chain runs to 153 residues: 3-hydroxyacyl-[acyl-carrier-protein] dehydratase FabZ (153 aa).

Residue H54 is part of the active site.

This sequence belongs to the thioester dehydratase family. FabZ subfamily.

The protein localises to the cytoplasm. The enzyme catalyses a (3R)-hydroxyacyl-[ACP] = a (2E)-enoyl-[ACP] + H2O. Involved in unsaturated fatty acids biosynthesis. Catalyzes the dehydration of short chain beta-hydroxyacyl-ACPs and long chain saturated and unsaturated beta-hydroxyacyl-ACPs. This Shewanella sediminis (strain HAW-EB3) protein is 3-hydroxyacyl-[acyl-carrier-protein] dehydratase FabZ.